Reading from the N-terminus, the 144-residue chain is Urease accessory protein UreE (144 aa).

This sequence belongs to the UreE family.

It is found in the cytoplasm. Functionally, involved in urease metallocenter assembly. Binds nickel. Probably functions as a nickel donor during metallocenter assembly. The protein is Urease accessory protein UreE of Thermosynechococcus vestitus (strain NIES-2133 / IAM M-273 / BP-1).